Consider the following 67-residue polypeptide: MGTLPVMVLFGLSFPPAFFALLAALPLFWLLRRLLQPSGLYDMIWHPALFNCALYGCLFYLVSWLFI.

2 helical membrane-spanning segments follow: residues 8–28 (VLFGLSFPPAFFALLAALPLF) and 47–67 (PALFNCALYGCLFYLVSWLFI).

It belongs to the AaeX family.

The protein localises to the cell membrane. The protein is Protein AaeX of Edwardsiella piscicida.